A 53-amino-acid polypeptide reads, in one-letter code: Small, acid-soluble spore protein K (53 aa).

Positions 1–53 are disordered; sequence MGRQAEFWSESKNNSKIDGQPKAKARFASKRPNGTINTHPQERMRAANQQEEE.

This sequence belongs to the SspK family.

It is found in the spore core. This is Small, acid-soluble spore protein K from Bacillus cytotoxicus (strain DSM 22905 / CIP 110041 / 391-98 / NVH 391-98).